A 618-amino-acid chain; its full sequence is Membrane protein insertase YidC (618 aa).

The next 6 membrane-spanning stretches (helical) occupy residues 3–23, 363–383, 439–459, 478–498, 520–540, and 545–565; these read KNTI…SFLS, WGLS…IVVF, LPML…PSAI, FITF…FCLL, PQMA…LFVL, and SGLN…MIIL.

The protein belongs to the OXA1/ALB3/YidC family. Type 1 subfamily. Interacts with the Sec translocase complex via SecD. Specifically interacts with transmembrane segments of nascent integral membrane proteins during membrane integration.

It localises to the cell membrane. Its function is as follows. Required for the insertion and/or proper folding and/or complex formation of integral membrane proteins into the membrane. Involved in integration of membrane proteins that insert both dependently and independently of the Sec translocase complex, as well as at least some lipoproteins. Aids folding of multispanning membrane proteins. The protein is Membrane protein insertase YidC of Bacteroides fragilis (strain YCH46).